Consider the following 294-residue polypeptide: Probable cobalamin biosynthesis protein CobD (294 aa).

A run of 4 helical transmembrane segments spans residues 52 to 72 (AGLLTALVVITFAFLLSIVPF), 73 to 93 (YAPFPLNYFLAAYLLKSSFAI), 145 to 165 (DSVVAPLFYFLLFGLQGAVIY), and 268 to 288 (IYWLVVTGWVIVVVLLLATGV).

Belongs to the CobD/CbiB family.

It localises to the cell membrane. It functions in the pathway cofactor biosynthesis; adenosylcobalamin biosynthesis. In terms of biological role, converts cobyric acid to cobinamide by the addition of aminopropanol on the F carboxylic group. This chain is Probable cobalamin biosynthesis protein CobD, found in Thermococcus kodakarensis (strain ATCC BAA-918 / JCM 12380 / KOD1) (Pyrococcus kodakaraensis (strain KOD1)).